A 31-amino-acid chain; its full sequence is Hemocyanin subunit 2 (31 aa).

It belongs to the tyrosinase family. Hemocyanin subfamily. Hemolymph.

It localises to the secreted. The protein resides in the extracellular space. In terms of biological role, hemocyanins are copper-containing oxygen carriers occurring freely dissolved in the hemolymph of many mollusks and arthropods. The chain is Hemocyanin subunit 2 from Maja squinado (Mediterranean spider crab).